The primary structure comprises 379 residues: MKYVDEFRDGATARQLAARIAAEADPARQYRLMEFCGGHTHAIFRYGIPDLLPASVRLIHGPGCPVCVMPIGRLDMAIELARRPEVILCTYGDMLRVPASGRVSLLKARAESAAVRMLYSPAEALKLAQDNPSKEVVFFAIGFETTTPPTALVIEQAQRLGLKNFSVFCNHVLTPAAMHAILATPEARAGTLQLDGFIGPAHVSTVIGSAPYAPFPQQYGTPLVIAGFEPLDLLQALLMLVRQLNEGRAEVENQFTRAVTAEGNRKAKALTERVFEVRESFEWRGLGAVPHSALQIREAFAEFNAERRFALEPRTGLENKACECPAILRGAKSPRDCKLFGNPCTPDNPLGSCMVSSEGACAAWYAYGRQRQAAVEVAR.

Fe cation-binding residues include Cys36, Cys64, and Cys67.

It belongs to the HypD family.

The protein is Hydrogenase expression/formation protein HupD (hupD) of Azotobacter chroococcum mcd 1.